Here is a 706-residue protein sequence, read N- to C-terminus: Elongation factor G (706 aa).

One can recognise a tr-type G domain in the interval 12-288 (EKTRNIGIMA…GVTNYLPSPN (277 aa)). Residues 21–28 (AHIDAGKT), 85–89 (DTPGH), and 139–142 (NKMD) each bind GTP. Residues 288-309 (NDVPAITGHHPQDKEEDITRHP) form a disordered region. Over residues 297–309 (HPQDKEEDITRHP) the composition is skewed to basic and acidic residues.

This sequence belongs to the TRAFAC class translation factor GTPase superfamily. Classic translation factor GTPase family. EF-G/EF-2 subfamily.

Its subcellular location is the cytoplasm. Catalyzes the GTP-dependent ribosomal translocation step during translation elongation. During this step, the ribosome changes from the pre-translocational (PRE) to the post-translocational (POST) state as the newly formed A-site-bound peptidyl-tRNA and P-site-bound deacylated tRNA move to the P and E sites, respectively. Catalyzes the coordinated movement of the two tRNA molecules, the mRNA and conformational changes in the ribosome. This chain is Elongation factor G, found in Salinibacter ruber (strain DSM 13855 / M31).